The primary structure comprises 1889 residues: MEMEANDHFNFTGLPPAPAASGLKPSPSSGEGLYTNGSPMNFPQQGKSLNGDVNVNGLSTVSHTTTSGILNSAPHSSSTSHLHHPNVAYDCLWNYSQYPSANPGNNLKDPPLLSQFPGGQYPLNGILGGNRQPSSPSHNTNLRAGSQEFWANGTQSPMGLNFDSQELYDSFPDQNFEVMPNGPPSFFTSPQTSPMLGSSIQTFAPSQDVSSDIHPDEAAEKELTSVVAENGTGLVGSLELEEEQPELKMCGYNGSVSSVESLHQEVSVLVPDPTVSCLDDPSHLPDQLEDTPILSEDSLEPFDSLAAEPVSGSLYGIDDAELMGAEDKLPLEGNPVISALDCPALSNANAFSLLADDSQTSASIFVSPTSPPVLGESVLQDNSFGLNSCSDSEQEEIETQSSNFQRPLTEPAPDQPPSTQLHPAVSPTASPAASLTASAEISPAVSPVASSPVPPEVFVAVSPASSPALPAISLEASMTTPVTSPQGSPEPSPAAAFQTVSPARKNVSSAPKARADREETTGGAVAVSGSGDVLKRRIATPEEVRLPLQHGWRREVRIKKGSHRWQGETWYYGPCGKRMKQFPEVIKYLSRNVVHSVRREHFSFSPRMPVGDFFEERDTPEGLQWVQLSAEEIPSRIQAITGKRGRPRNNEKAKNKEVPKVKRGRGRPPKIKMPELLNKTDNRLPKKLETQEILSEDDKAKMTKNKKKMRQKVQRGESQTPVQGQARNKRKQDTKSLKQKDTKKKLKAEKEKMKTKQEKLKEKVKREKKEKVKAKGKEGPRARPSCRADKTLATQKRLEEQQRQQAILEEMKKPTEGMCLSDHQPLPDFTRIPGLTLSSRAFSDCLTIVEFLHSFGKVLGFDLTKDVPSLGVLQEGLLCQGDSLDKVQDLLVRLLKAALHDPGLPPYCQSLKILGEKMSEIPLTRDNVSEILRCFLMAYRVEPPFCDSLRTQPFQAQPPQQKAAILAFLVHELNSSTIIINEIDKTLESVSSCRKNKWIVEGRLRRLKTALAKRTGRPEVMMEGAEDGLGRRRSSRIMEETSGIEEEEEEENTTAVHGRRGRKEGEIDVAASSIPELERHIEKLSKRQLFFRKKLLHSSQMLRAVSLGQDRYRRHYWVLPYLAGIFVEGSEGSTVTEDEIKQETESLMEVVTSTPSSARASVKRELTGSNASTSPARSRGRPRKPKPGSLQPQHLQSTIRECDSEQAQTQVHPEPQPQLQAPTQPHLQPSSGFLEPEGSPFSLGQSQHDLSQSAFLSWLSQTQSHNSLLSSSVLTPDSSPGKLDSAPSQSLEEPEPDEAQSCPGPQGPWFNFSAQIPCDAAPTPPPAVSEDQPTPSLQLLASSKPMNTPGAANPCSPVQLSSTHLPGGTPKRLSGDSEEMSQSPTGLGQPKRRGRPPSKFFKQVEQHYLTQLTAQPIPPEMCSGWWWIRDPETLDVLLKALHPRGIREKALHKHLSKHKDFLQEVCLQPLTDPIFEPNELPALEEGVMSWSPKEKTYETDLAVLQWVEELEQRVVLSDLQIRGWTCPTPDSTREDLTYCEHLPDSPEDIPWRGRGREGTVPQRQNNNPLDLAVMRLAVLEQNVERRYLREPLWAAHEVVVEKALLSTPNGAPDGTSTEISYEITPRVRVWRQTLERCRSAAQVCLCMGQLERSIAWEKSVNKVTCLVCRKGDNDEFLLLCDGCDRGCHIYCHRPKMEAVPEGDWFCAVCLSQQVEEEYTQRPGFPKRGQKRKSSFPLTFPEGDSRRRMLSRSRDSPAVPRYPEDGLSPPKRRRHSMRSHHSDLTFCEIILMEMESHDAAWPFLEPVNPRLVSGYRRVIKNPMDFSTMRERLLRGGYTSSEEFAADALLVFDNCQTFNEDDSEVGKAGHVMRRFFESRWEEFYQGKQANL.

Disordered regions lie at residues 1 to 59, 384 to 433, and 479 to 526; these read MEME…NGLS, FGLN…SPAA, and TTPV…GAVA. A compositionally biased stretch (polar residues) spans 35-59; that stretch reads TNGSPMNFPQQGKSLNGDVNVNGLS. Residues 332–726 form a required for TTF1 binding region; sequence EGNPVISALD…ESQTPVQGQA (395 aa). Low complexity predominate over residues 423-433; the sequence is PAVSPTASPAA. 2 stretches are compositionally biased toward polar residues: residues 479-489 and 498-509; these read TTPVTSPQGSP and QTVSPARKNVSS. At Thr499 the chain carries Phosphothreonine. At Ser501 the chain carries Phosphoserine. The 72-residue stretch at 538-609 folds into the MBD domain; it reads IATPEEVRLP…EHFSFSPRMP (72 aa). At Thr540 the chain carries Phosphothreonine. Ser605 is subject to Phosphoserine. Residues 638-791 are disordered; sequence QAITGKRGRP…ARPSCRADKT (154 aa). 2 DNA-binding regions (a.T hook) span residues 641-653 and 662-674; these read TGKRGRPRNNEKA and KRGRGRPPKIKMP. Residues 648-660 are compositionally biased toward basic and acidic residues; sequence RNNEKAKNKEVPK. A compositionally biased stretch (basic residues) spans 661–670; it reads VKRGRGRPPK. An N6-acetyllysine; by KAT8 modification is found at Lys672. A compositionally biased stretch (basic and acidic residues) spans 678–701; sequence NKTDNRLPKKLETQEILSEDDKAK. Residues 686 to 813 are a coiled coil; the sequence is KKLETQEILS…QQAILEEMKK (128 aa). Over residues 702–713 the composition is skewed to basic residues; the sequence is MTKNKKKMRQKV. The segment covering 716–726 has biased composition (polar residues); that stretch reads GESQTPVQGQA. Basic and acidic residues-rich tracts occupy residues 731–740 and 748–791; these read KQDTKSLKQK and AEKE…ADKT. N6-acetyllysine is present on Lys790. In terms of domain architecture, DDT spans 839 to 904; sequence SRAFSDCLTI…LKAALHDPGL (66 aa). A Glycyl lysine isopeptide (Lys-Gly) (interchain with G-Cter in SUMO2) cross-link involves residue Lys857. Residues 1039 to 1063 are disordered; it reads EETSGIEEEEEEENTTAVHGRRGRK. A Phosphoserine modification is found at Ser1042. A compositionally biased stretch (acidic residues) spans 1042–1052; that stretch reads SGIEEEEEEEN. Glycyl lysine isopeptide (Lys-Gly) (interchain with G-Cter in SUMO2) cross-links involve residues Lys1141 and Lys1163. Disordered stretches follow at residues 1147-1247 and 1269-1397; these read LMEV…GQSQ and LSSS…GRPP. At Ser1174 the chain carries Phosphoserine. Residues 1176 to 1188 constitute a DNA-binding region (a.T hook 3); that stretch reads ARSRGRPRKPKPG. 3 stretches are compositionally biased toward polar residues: residues 1190-1231, 1269-1278, and 1331-1346; these read LQPQ…QPSS, LSSSVLTPDS, and DQPTPSLQLLASSKPM. A phosphoserine mark is found at Ser1374, Ser1377, and Ser1383. The segment at residues 1390–1402 is a DNA-binding region (a.T hook 4); sequence PKRRGRPPSKFFK. Ser1545 bears the Phosphoserine mark. Residues Lys1662 and Lys1695 each participate in a glycyl lysine isopeptide (Lys-Gly) (interchain with G-Cter in SUMO2) cross-link. Residues 1662–1712 form a PHD-type zinc finger; that stretch reads KVTCLVCRKGDNDEFLLLCDGCDRGCHIYCHRPKMEAVPEGDWFCAVCLSQ. A disordered region spans residues 1720-1778; that stretch reads QRPGFPKRGQKRKSSFPLTFPEGDSRRRMLSRSRDSPAVPRYPEDGLSPPKRRRHSMRS. The residue at position 1733 (Ser1733) is a Phosphoserine. A Phosphothreonine modification is found at Thr1738. The segment covering 1742–1754 has biased composition (basic and acidic residues); that stretch reads GDSRRRMLSRSRD. Phosphoserine is present on residues Ser1755 and Ser1767. Over residues 1769–1778 the composition is skewed to basic residues; it reads PKRRRHSMRS. The region spanning 1777 to 1881 is the Bromo domain; that stretch reads RSHHSDLTFC…RFFESRWEEF (105 aa).

This sequence belongs to the WAL family. In terms of assembly, component of the NoRC-1 ISWI chromatin remodeling complex at least composed of SMARCA1 and BAZ2A/TIP5, which regulates the spacing of histone octamers on the DNA template to facilitate access to DNA. Within the NoRC-1 ISWI chromatin remodeling complex interacts with SMARCA1; the interaction is direct. Component of the NoRC-5 ISWI chromatin remodeling complex (also called the NoRC nucleolar-remodeling complex), at least composed of SMARCA5/SNF2H and BAZ2A/TIP5, which regulates the spacing of histone octamers on the DNA template to facilitate access to DNA. Within the NoRC-5 ISWI chromatin remodeling complexes interacts with SMARCA5/SNF2H; the interaction is direct. Interacts with TTF1; the interaction is required for recruitment of the NoRC-5 ISWI chromatin remodeling complex to rDNA. Interacts with HDAC1. Interacts with SIN3A. Interacts with DNMT1 and DNM3B. Interacts with BEND3 and USP21. In terms of processing, ubiquitinated. Deubiquitinated by USP21 leading to its stabilization. Acetylation at Lys-672 by KAT8/MOF promotes its dissociation from pRNA, affecting heterochromatin formation, nucleosome positioning and rDNA silencing. Deacetylation by SIRT1 in late S phase enhances pRNA-binding, allowing de novo DNA methylation and heterochromatin formation. Acetylation is high during S phase and declines to background levels in late S phase when the silent copies of rRNA genes are replicated.

It localises to the nucleus. It is found in the nucleolus. In terms of biological role, regulatory subunit of the ATP-dependent NoRC-1 and NoRC-5 ISWI chromatin remodeling complexes, which form ordered nucleosome arrays on chromatin and facilitate access to DNA during DNA-templated processes such as DNA replication, transcription, and repair. Both complexes regulate the spacing of nucleosomes along the chromatin and have the ability to slide mononucleosomes to the center of a DNA template. Directly stimulates the ATPase activity of SMARCA5 in the NoRC-5 ISWI chromatin remodeling complex. The NoRC-1 ISWI chromatin remodeling complex has a lower ATP hydrolysis rate than the NoRC-5 ISWI chromatin remodeling complex. Within the NoRC-5 ISWI chromatin remodeling complex, mediates silencing of a fraction of rDNA by recruiting histone-modifying enzymes and DNA methyltransferases, leading to heterochromatin formation and transcriptional silencing. In the complex, it plays a central role by being recruited to rDNA and by targeting chromatin modifying enzymes such as HDAC1, leading to repress RNA polymerase I transcription. Recruited to rDNA via its interaction with TTF1 and its ability to recognize and bind histone H4 acetylated on 'Lys-16' (H4K16ac), leading to deacetylation of H4K5ac, H4K8ac, H4K12ac but not H4K16ac. Specifically binds pRNAs, 150-250 nucleotide RNAs that are complementary in sequence to the rDNA promoter; pRNA-binding is required for heterochromatin formation and rDNA silencing. The polypeptide is Bromodomain adjacent to zinc finger domain protein 2A (Baz2a) (Mus musculus (Mouse)).